The following is a 474-amino-acid chain: tRNA-2-methylthio-N(6)-dimethylallyladenosine synthase (474 aa).

Residues 3–120 (KKLHIKTWGC…LPEMINHVQG (118 aa)) enclose the MTTase N-terminal domain. [4Fe-4S] cluster is bound by residues cysteine 12, cysteine 49, cysteine 83, cysteine 157, cysteine 161, and cysteine 164. One can recognise a Radical SAM core domain in the interval 143–375 (RAEGPTAFVS…QQRISQQAME (233 aa)). The TRAM domain maps to 378 to 441 (RKMVGTVQRV…ASSLRGILLR (64 aa)).

Belongs to the methylthiotransferase family. MiaB subfamily. Monomer. [4Fe-4S] cluster serves as cofactor.

It is found in the cytoplasm. It carries out the reaction N(6)-dimethylallyladenosine(37) in tRNA + (sulfur carrier)-SH + AH2 + 2 S-adenosyl-L-methionine = 2-methylsulfanyl-N(6)-dimethylallyladenosine(37) in tRNA + (sulfur carrier)-H + 5'-deoxyadenosine + L-methionine + A + S-adenosyl-L-homocysteine + 2 H(+). Its function is as follows. Catalyzes the methylthiolation of N6-(dimethylallyl)adenosine (i(6)A), leading to the formation of 2-methylthio-N6-(dimethylallyl)adenosine (ms(2)i(6)A) at position 37 in tRNAs that read codons beginning with uridine. The polypeptide is tRNA-2-methylthio-N(6)-dimethylallyladenosine synthase (Yersinia pseudotuberculosis serotype O:1b (strain IP 31758)).